The following is a 216-amino-acid chain: RNA pyrophosphohydrolase (216 aa).

A Nudix hydrolase domain is found at 6-149 (GFRPNVGIIL…KRDVYQLALT (144 aa)). The Nudix box signature appears at 38–59 (GGIKYGETPMQAMYRELHEETG).

This sequence belongs to the Nudix hydrolase family. RppH subfamily. It depends on a divalent metal cation as a cofactor.

Its function is as follows. Accelerates the degradation of transcripts by removing pyrophosphate from the 5'-end of triphosphorylated RNA, leading to a more labile monophosphorylated state that can stimulate subsequent ribonuclease cleavage. In Burkholderia ambifaria (strain MC40-6), this protein is RNA pyrophosphohydrolase.